Here is a 249-residue protein sequence, read N- to C-terminus: UDP-N-acetyl-D-mannosaminuronic acid transferase (249 aa).

This sequence belongs to the glycosyltransferase 26 family.

It carries out the reaction UDP-N-acetyl-alpha-D-mannosaminouronate + N-acetyl-alpha-D-glucosaminyl-di-trans,octa-cis-undecaprenyl diphosphate = beta-D-ManNAcA-(1-&gt;4)-alpha-D-GlcNAc-di-trans,octa-cis-undecaprenyl diphosphate + UDP + H(+). The protein operates within bacterial outer membrane biogenesis; enterobacterial common antigen biosynthesis. Functionally, catalyzes the synthesis of Und-PP-GlcNAc-ManNAcA (Lipid II), the second lipid-linked intermediate involved in enterobacterial common antigen (ECA) synthesis. The polypeptide is UDP-N-acetyl-D-mannosaminuronic acid transferase (Pectobacterium atrosepticum (strain SCRI 1043 / ATCC BAA-672) (Erwinia carotovora subsp. atroseptica)).